Reading from the N-terminus, the 986-residue chain is P3N-PIPO polyprotein (986 aa).

In terms of domain architecture, Peptidase S30 spans 141–284 (KLTEGQMNHL…QSILNSMIQF (144 aa)). Active-site for P1 proteinase activity residues include histidine 192, aspartate 201, and serine 235. Residues 334–337 (KITC) carry the Involved in interaction with stylet and aphid transmission motif. Residues 592 to 594 (PTK) carry the Involved in virions binding and aphid transmission motif. One can recognise a Peptidase C6 domain in the interval 618 to 740 (LYIAKQGYCY…ESDIKHYRVG (123 aa)). Residues cysteine 626 and histidine 699 each act as for helper component proteinase activity in the active site.

The protein belongs to the potyviridae P3N-PIPO polyprotein family. As to quaternary structure, interacts (via PIPO domain) with host PCaP1 protein; this interaction may help to anchor the movement complex to the plasma membrane from which the complex could move to the plasmodesmata. Post-translationally, potyviral RNA is expressed as two polyproteins which undergo post-translational proteolytic processing. Genome polyprotein is processed by NIa-pro, P1 and HC-pro proteinases resulting in the production of at least ten individual proteins. P3N-PIPO is cleaved by P1 and HC-pro proteinases resulting in the production of three individual proteins. The P1 proteinase and the HC-pro cleave only their respective C-termini autocatalytically.

The protein resides in the host cell junction. It is found in the host plasmodesma. The enzyme catalyses Hydrolyzes a Gly-|-Gly bond at its own C-terminus, commonly in the sequence -Tyr-Xaa-Val-Gly-|-Gly, in the processing of the potyviral polyprotein.. Required for aphid transmission and also has proteolytic activity. Only cleaves a Gly-Gly dipeptide at its own C-terminus. Interacts with virions and aphid stylets. Acts as a suppressor of RNA-mediated gene silencing, also known as post-transcriptional gene silencing (PTGS), a mechanism of plant viral defense that limits the accumulation of viral RNAs. May have RNA-binding activity. In terms of biological role, allows efficient cell to cell propagation, by bypassing the host cell wall barrier. Transports viral genome to neighboring plant cells directly through plasmosdesmata, without any budding. This chain is P3N-PIPO polyprotein, found in Potato virus Y (strain N) (PVY).